The following is a 96-amino-acid chain: DNA-directed RNA polymerase subunit Rpo11 (96 aa).

The protein belongs to the archaeal Rpo11/eukaryotic RPB11/RPC19 RNA polymerase subunit family. As to quaternary structure, part of the RNA polymerase complex.

It is found in the cytoplasm. It catalyses the reaction RNA(n) + a ribonucleoside 5'-triphosphate = RNA(n+1) + diphosphate. In terms of biological role, DNA-dependent RNA polymerase (RNAP) catalyzes the transcription of DNA into RNA using the four ribonucleoside triphosphates as substrates. This is DNA-directed RNA polymerase subunit Rpo11 from Methanococcus maripaludis (strain DSM 14266 / JCM 13030 / NBRC 101832 / S2 / LL).